The primary structure comprises 490 residues: Ribulose bisphosphate carboxylase large chain (490 aa).

Substrate-binding residues include N127 and T177. K179 functions as the Proton acceptor in the catalytic mechanism. Position 181 (K181) interacts with substrate. Mg(2+) is bound by residues K205, D207, and E208. Residue K205 is modified to N6-carboxylysine. H297 functions as the Proton acceptor in the catalytic mechanism. The substrate site is built by R298, H330, and S382.

The protein belongs to the RuBisCO large chain family. Type I subfamily. Heterohexadecamer of 8 large chains and 8 small chains. Mg(2+) serves as cofactor.

The protein localises to the plastid. The protein resides in the chloroplast. The enzyme catalyses 2 (2R)-3-phosphoglycerate + 2 H(+) = D-ribulose 1,5-bisphosphate + CO2 + H2O. It carries out the reaction D-ribulose 1,5-bisphosphate + O2 = 2-phosphoglycolate + (2R)-3-phosphoglycerate + 2 H(+). RuBisCO catalyzes two reactions: the carboxylation of D-ribulose 1,5-bisphosphate, the primary event in carbon dioxide fixation, as well as the oxidative fragmentation of the pentose substrate in the photorespiration process. Both reactions occur simultaneously and in competition at the same active site. In Cylindrotheca sp. (strain N1) (Marine diatom), this protein is Ribulose bisphosphate carboxylase large chain.